The chain runs to 785 residues: Protein SEY1 (785 aa).

The Cytoplasmic portion of the chain corresponds to 1 to 690; it reads MTDLEVSAIQ…KRSVINSKTE (690 aa). A GB1/RHD3-type G domain is found at 40–266; the sequence is GLNYHIVSVF…SEDQLFNEGY (227 aa). Residue 50 to 57 participates in GTP binding; sequence GSQSTGKS. The stretch at 451-479 forms a coiled coil; it reads PKLRELEEELSNLRTELVNKEQENIKTKI. Residues 691-711 traverse the membrane as a helical segment; that stretch reads VPLYIYALLLVLGWNEFMIIL. At 712 to 714 the chain is on the lumenal side; sequence RNP. The chain crosses the membrane as a helical span at residues 715–735; the sequence is LLITLLLIGLTGLYLGYKTKL. Topologically, residues 736 to 785 are cytoplasmic; that stretch reads LGPIVQVVQAMIQELQDQAKNKLRDVLVSEPEAPSQVRIGKEVDATKDED.

It belongs to the TRAFAC class dynamin-like GTPase superfamily. GB1/RHD3 GTPase family. RHD3 subfamily.

The protein localises to the endoplasmic reticulum membrane. In terms of biological role, cooperates with the reticulon proteins and tubule-shaping DP1 family proteins to generate and maintain the structure of the tubular endoplasmic reticulum network. Has GTPase activity, which is required for its function in ER organization. The protein is Protein SEY1 of Komagataella phaffii (strain GS115 / ATCC 20864) (Yeast).